Reading from the N-terminus, the 656-residue chain is UvrABC system protein B (656 aa).

The region spanning 29 to 414 (KLSEFKTKQQ…SLSQNNVIEQ (386 aa)) is the Helicase ATP-binding domain. 42–49 (GATGTGKT) is an ATP binding site. A Beta-hairpin motif is present at residues 95–118 (YFDFYQPEAYLPSKGIYIEKSATV). The Helicase C-terminal domain occupies 434–596 (QVEDLIEEII…KTPKTVVKPL (163 aa)). A UVR domain is found at 614-649 (AALIKQLTKEMKKAAANQNYELAIEIRDSIFELEKE).

This sequence belongs to the UvrB family. As to quaternary structure, forms a heterotetramer with UvrA during the search for lesions. Interacts with UvrC in an incision complex.

It localises to the cytoplasm. In terms of biological role, the UvrABC repair system catalyzes the recognition and processing of DNA lesions. A damage recognition complex composed of 2 UvrA and 2 UvrB subunits scans DNA for abnormalities. Upon binding of the UvrA(2)B(2) complex to a putative damaged site, the DNA wraps around one UvrB monomer. DNA wrap is dependent on ATP binding by UvrB and probably causes local melting of the DNA helix, facilitating insertion of UvrB beta-hairpin between the DNA strands. Then UvrB probes one DNA strand for the presence of a lesion. If a lesion is found the UvrA subunits dissociate and the UvrB-DNA preincision complex is formed. This complex is subsequently bound by UvrC and the second UvrB is released. If no lesion is found, the DNA wraps around the other UvrB subunit that will check the other stand for damage. The polypeptide is UvrABC system protein B (Mycoplasma genitalium (strain ATCC 33530 / DSM 19775 / NCTC 10195 / G37) (Mycoplasmoides genitalium)).